A 1036-amino-acid chain; its full sequence is Isoleucine--tRNA ligase (1036 aa).

Positions Pro-46–His-56 match the 'HIGH' region motif. The 'KMSKS' region motif lies at Lys-589–Arg-593. Lys-592 is an ATP binding site.

It belongs to the class-I aminoacyl-tRNA synthetase family. IleS type 2 subfamily. Monomer. Zn(2+) is required as a cofactor.

It localises to the cytoplasm. The catalysed reaction is tRNA(Ile) + L-isoleucine + ATP = L-isoleucyl-tRNA(Ile) + AMP + diphosphate. Functionally, catalyzes the attachment of isoleucine to tRNA(Ile). As IleRS can inadvertently accommodate and process structurally similar amino acids such as valine, to avoid such errors it has two additional distinct tRNA(Ile)-dependent editing activities. One activity is designated as 'pretransfer' editing and involves the hydrolysis of activated Val-AMP. The other activity is designated 'posttransfer' editing and involves deacylation of mischarged Val-tRNA(Ile). This Chlamydia trachomatis serovar A (strain ATCC VR-571B / DSM 19440 / HAR-13) protein is Isoleucine--tRNA ligase.